The primary structure comprises 222 residues: MEFMLDTLNLDEIKKWSEILPLAGVTSNPTIAKREGSINFFERIKDVRELIGSTPSIHVQVISQDFEGILKDAHKIRRQAGDDIFIKVPVTPAGLRAIKALKKEGYHITATAIYTVIQGLLAIEAGADYLAPYYNRMENLNIDSNSVIRQLALAIDRQNSPSKILAASFKNVAQVNNALAAGAHAVTAGADVFESAFAMPSIQKAVDDFSDDWFVIQNSRSI.

Lys-87 (schiff-base intermediate with substrate) is an active-site residue.

The protein belongs to the transaldolase family. Type 3A subfamily.

It localises to the cytoplasm. It catalyses the reaction beta-D-fructose 6-phosphate = dihydroxyacetone + D-glyceraldehyde 3-phosphate. Functionally, catalyzes the reversible formation of fructose 6-phosphate from dihydroxyacetone and D-glyceraldehyde 3-phosphate via an aldolization reaction. In Streptococcus pneumoniae (strain ATCC 700669 / Spain 23F-1), this protein is Probable fructose-6-phosphate aldolase.